The following is a 125-amino-acid chain: Calcitonin receptor-stimulating peptide 2 (125 aa).

A signal peptide spans 1–25 (MGFWKFLPFLVLSFLVVYQAGMFQA). Positions 26–77 (APFRSALENDFDPAILTEKEMCLLLAAVMNDYVQMKTSELKQEAEHFHITAQ) are excised as a propeptide. Cys81 and Cys86 are oxidised to a cystine.

It belongs to the calcitonin family.

Its subcellular location is the secreted. This chain is Calcitonin receptor-stimulating peptide 2 (CRSP2), found in Capra hircus (Goat).